The primary structure comprises 325 residues: GMP reductase (325 aa).

The active-site Thioimidate intermediate is the C173. Position 202–225 (I202–V225) interacts with NADP(+).

It belongs to the IMPDH/GMPR family. GuaC type 2 subfamily.

The catalysed reaction is IMP + NH4(+) + NADP(+) = GMP + NADPH + 2 H(+). Functionally, catalyzes the irreversible NADPH-dependent deamination of GMP to IMP. It functions in the conversion of nucleobase, nucleoside and nucleotide derivatives of G to A nucleotides, and in maintaining the intracellular balance of A and G nucleotides. The protein is GMP reductase of Acidovorax sp. (strain JS42).